The following is a 54-amino-acid chain: UPF0391 membrane protein Sde_0270 (54 aa).

The next 2 helical transmembrane spans lie at 6-26 and 29-49; these read IVFL…IAGV and GIAK…LVIG.

This sequence belongs to the UPF0391 family.

Its subcellular location is the cell membrane. The chain is UPF0391 membrane protein Sde_0270 from Saccharophagus degradans (strain 2-40 / ATCC 43961 / DSM 17024).